The sequence spans 207 residues: N-(5'-phosphoribosyl)anthranilate isomerase (207 aa).

It belongs to the TrpF family.

The catalysed reaction is N-(5-phospho-beta-D-ribosyl)anthranilate = 1-(2-carboxyphenylamino)-1-deoxy-D-ribulose 5-phosphate. It participates in amino-acid biosynthesis; L-tryptophan biosynthesis; L-tryptophan from chorismate: step 3/5. This chain is N-(5'-phosphoribosyl)anthranilate isomerase, found in Legionella pneumophila subsp. pneumophila (strain Philadelphia 1 / ATCC 33152 / DSM 7513).